The primary structure comprises 395 residues: NAD(P)H-quinone oxidoreductase subunit H, chloroplastic (395 aa).

Belongs to the complex I 49 kDa subunit family. In terms of assembly, NDH is composed of at least 16 different subunits, 5 of which are encoded in the nucleus.

The protein localises to the plastid. The protein resides in the chloroplast thylakoid membrane. It catalyses the reaction a plastoquinone + NADH + (n+1) H(+)(in) = a plastoquinol + NAD(+) + n H(+)(out). The enzyme catalyses a plastoquinone + NADPH + (n+1) H(+)(in) = a plastoquinol + NADP(+) + n H(+)(out). NDH shuttles electrons from NAD(P)H:plastoquinone, via FMN and iron-sulfur (Fe-S) centers, to quinones in the photosynthetic chain and possibly in a chloroplast respiratory chain. The immediate electron acceptor for the enzyme in this species is believed to be plastoquinone. Couples the redox reaction to proton translocation, and thus conserves the redox energy in a proton gradient. The protein is NAD(P)H-quinone oxidoreductase subunit H, chloroplastic of Coffea arabica (Arabian coffee).